Here is a 201-residue protein sequence, read N- to C-terminus: Phosphoheptose isomerase (201 aa).

Positions 36-195 (IAKSLNEGGK…EDILFEIPAA (160 aa)) constitute an SIS domain. A substrate-binding site is contributed by 51 to 53 (NGG). His-60 and Glu-64 together coordinate Zn(2+). Residues Glu-64, 93–94 (ND), 119–121 (STS), Ser-124, and Gln-171 contribute to the substrate site. Zn(2+)-binding residues include Gln-171 and His-179.

It belongs to the SIS family. GmhA subfamily. Requires Zn(2+) as cofactor.

Its subcellular location is the cytoplasm. The enzyme catalyses 2 D-sedoheptulose 7-phosphate = D-glycero-alpha-D-manno-heptose 7-phosphate + D-glycero-beta-D-manno-heptose 7-phosphate. It participates in carbohydrate biosynthesis; D-glycero-D-manno-heptose 7-phosphate biosynthesis; D-glycero-alpha-D-manno-heptose 7-phosphate and D-glycero-beta-D-manno-heptose 7-phosphate from sedoheptulose 7-phosphate: step 1/1. Its function is as follows. Catalyzes the isomerization of sedoheptulose 7-phosphate in D-glycero-D-manno-heptose 7-phosphate. This is Phosphoheptose isomerase from Thermodesulfovibrio yellowstonii (strain ATCC 51303 / DSM 11347 / YP87).